The primary structure comprises 448 residues: Acyl-lipid (9-3)-desaturase (448 aa).

The Cytochrome b5 heme-binding domain occupies 6–90 (KKYITSDELK…LKDYSVSEVS (85 aa)). Heme is bound by residues His-41 and His-64. Transmembrane regions (helical) follow at residues 112–132 (IMFATLCFIAMLFAMSVYGVL) and 137–157 (VLVHLFSGCLMGFLWIQSGWI). A Histidine box-1 motif is present at residues 159-163 (HDAGH). Residues 172-192 (LNKFMGIFAANCLSGISIGWW) form a helical membrane-spanning segment. A Histidine box-2 motif is present at residues 196 to 200 (HNAHH). 3 consecutive transmembrane segments (helical) span residues 212 to 232 (LQYIPFLVVSSKFFGSLTSHF), 254 to 274 (FYPIMCAARLNMYVQSLIMLL), and 286 to 306 (LLGCLVFSIWYPLLVSCLPNW). A Histidine box-3 motif is present at residues 373 to 377 (QIEHH).

Belongs to the fatty acid desaturase type 1 family.

It is found in the endoplasmic reticulum membrane. The catalysed reaction is (9Z,12Z,15Z)-octadecatrienoyl-containing glycerolipid + 2 Fe(II)-[cytochrome b5] + O2 + 2 H(+) = (6Z,9Z,12Z,15Z)-octadecatetraenoyl-containing glycerolipid + 2 Fe(III)-[cytochrome b5] + 2 H2O. The enzyme catalyses a (9Z,12Z)-octadecadienoyl-containing glycerolipid + 2 Fe(II)-[cytochrome b5] + O2 + 2 H(+) = (6Z,9Z,12Z)-octadecatrienoyl-containing glycerolipid + 2 Fe(III)-[cytochrome b5] + 2 H2O. It functions in the pathway lipid metabolism; polyunsaturated fatty acid biosynthesis. Its function is as follows. Fatty acid desaturase able to introduce a delta(6)-double bond into delta(9)-unsaturated fatty-acid substrates. Can use both linoleic acid (18:2(9Z,12Z)) and alpha-linolenic acid (18:3(9Z,12Z,15Z)) as substrates. The polypeptide is Acyl-lipid (9-3)-desaturase (Borago officinalis (Bourrache)).